A 108-amino-acid polypeptide reads, in one-letter code: Universal stress protein Slr1101 (108 aa).

It belongs to the universal stress protein A family.

The chain is Universal stress protein Slr1101 from Synechocystis sp. (strain ATCC 27184 / PCC 6803 / Kazusa).